The sequence spans 89 residues: Small ribosomal subunit protein uS15 (89 aa).

Belongs to the universal ribosomal protein uS15 family. In terms of assembly, part of the 30S ribosomal subunit. Forms a bridge to the 50S subunit in the 70S ribosome, contacting the 23S rRNA.

In terms of biological role, one of the primary rRNA binding proteins, it binds directly to 16S rRNA where it helps nucleate assembly of the platform of the 30S subunit by binding and bridging several RNA helices of the 16S rRNA. Functionally, forms an intersubunit bridge (bridge B4) with the 23S rRNA of the 50S subunit in the ribosome. In Lactobacillus gasseri (strain ATCC 33323 / DSM 20243 / BCRC 14619 / CIP 102991 / JCM 1131 / KCTC 3163 / NCIMB 11718 / NCTC 13722 / AM63), this protein is Small ribosomal subunit protein uS15.